The sequence spans 464 residues: Glycine receptor subunit alpha-3 (464 aa).

An N-terminal signal peptide occupies residues 1-33; the sequence is MAHVRHFRTLLSGFYFWEAALLLSLVATKETNS. Residues 34–255 lie on the Extracellular side of the membrane; sequence ARSRSAPMSP…RFHLERQMGY (222 aa). Residue Asn-71 is glycosylated (N-linked (GlcNAc...) asparagine). A disulfide bridge connects residues Cys-171 and Cys-185. Zn(2+) contacts are provided by Glu-225 and Asp-227. Cys-231 and Cys-242 are oxidised to a cystine. 235 to 240 contributes to the strychnine binding site; it reads YNTGKF. His-248 contacts Zn(2+). Residues 256–277 form a helical membrane-spanning segment; it reads YLIQMYIPSLLIVILSWVSFWI. Residues 278–282 lie on the Cytoplasmic side of the membrane; that stretch reads NMDAA. Residues 283–303 form a helical membrane-spanning segment; sequence PARVALGITTVLTMTTQSSGS. Topologically, residues 304–314 are extracellular; sequence RASLPKVSYVK. A helical membrane pass occupies residues 315-335; it reads AIDIWMAVCLLFVFSALLEYA. Over 336 to 430 the chain is Cytoplasmic; it reads AVNFVSRQHK…FIDRAKKIDT (95 aa). Ser-370 is modified (phosphoserine). Ser-379 bears the Phosphoserine; by PKA mark. The helical transmembrane segment at 431–451 threads the bilayer; that stretch reads ISRACFPLAFLIFNIFYWVIY. Topologically, residues 452 to 464 are extracellular; that stretch reads KILRHEDIHHQQD.

Belongs to the ligand-gated ion channel (TC 1.A.9) family. Glycine receptor (TC 1.A.9.3) subfamily. GLRA3 sub-subfamily. In terms of assembly, homopentamer (in vitro). Heteropentamer composed of GLRA3 and GLRB. Both homopentamers and heteropentamers form functional ion channels, but their characteristics are subtly different. Post-translationally, phosphorylated by PKA; this causes down-regulation of channel activity.

It localises to the postsynaptic cell membrane. The protein localises to the perikaryon. The protein resides in the cell projection. It is found in the dendrite. Its subcellular location is the synapse. It localises to the cell membrane. The enzyme catalyses chloride(in) = chloride(out). Low levels of Zn(2+) ions (1 uM) increase glycine sensitivity and decrease the glycine concentration required for half-maximal channel activity. Channel activity is strongly enhanced by ethanol. Inhibited by picrotoxin. Inhibited by prostaglandin E2, probably via PKA-mediated phosphorylation at Ser-379. Functionally, glycine receptors are ligand-gated chloride channels. Channel opening is triggered by extracellular glycine. Channel characteristics depend on the subunit composition; heteropentameric channels display faster channel closure. Plays an important role in the down-regulation of neuronal excitability. Contributes to the generation of inhibitory postsynaptic currents. Contributes to increased pain perception in response to increased prostaglandin E2 levels. Plays a role in cellular responses to ethanol. This is Glycine receptor subunit alpha-3 (Glra3) from Rattus norvegicus (Rat).